The following is a 186-amino-acid chain: Lipid A acyltransferase PagP (186 aa).

Residues 1–25 (MNVSKYVAIFSFVFIQLISVGKVFA) form the signal peptide. Residues H58, D101, and S102 contribute to the active site.

Belongs to the lipid A palmitoyltransferase family. In terms of assembly, homodimer.

It is found in the cell outer membrane. The catalysed reaction is a lipid A + a 1,2-diacyl-sn-glycero-3-phosphocholine = a hepta-acyl lipid A + a 2-acyl-sn-glycero-3-phosphocholine. The enzyme catalyses a lipid IVA + a 1,2-diacyl-sn-glycero-3-phosphocholine = a lipid IVB + a 2-acyl-sn-glycero-3-phosphocholine. It carries out the reaction a lipid IIA + a 1,2-diacyl-sn-glycero-3-phosphocholine = a lipid IIB + a 2-acyl-sn-glycero-3-phosphocholine. In terms of biological role, transfers a fatty acid residue from the sn-1 position of a phospholipid to the N-linked hydroxyfatty acid chain on the proximal unit of lipid A or its precursors. This is Lipid A acyltransferase PagP from Shigella flexneri serotype X (strain 2002017).